The primary structure comprises 120 residues: Succinate dehydrogenase assembly factor 3, mitochondrial (120 aa).

The N-terminal 36 residues, 1 to 36 (MSRILMSQLTHPQRVRLLYKTILRLHRGLPAELRAL), are a transit peptide targeting the mitochondrion.

Belongs to the complex I LYR family. SDHAF3 subfamily. In terms of assembly, interacts with SdhB within an SdhA-SdhB subcomplex.

Its subcellular location is the mitochondrion matrix. Functionally, plays an essential role in the assembly of succinate dehydrogenase (SDH), an enzyme complex (also referred to as respiratory complex II) that is a component of both the tricarboxylic acid (TCA) cycle and the mitochondrial electron transport chain, and which couples the oxidation of succinate to fumarate with the reduction of ubiquinone (coenzyme Q) to ubiquinol. Promotes maturation of the iron-sulfur protein subunit SdhB of the SDH catalytic dimer, protecting it from the deleterious effects of oxidants. In Drosophila melanogaster (Fruit fly), this protein is Succinate dehydrogenase assembly factor 3, mitochondrial.